A 700-amino-acid chain; its full sequence is Elongation factor G 2 (700 aa).

Residues 8 to 290 (ERYRNIGISA…AVIDFLPSPV (283 aa)) form the tr-type G domain. GTP contacts are provided by residues 17–24 (AHIDAGKT), 88–92 (DTPGH), and 142–145 (NKMD).

Belongs to the TRAFAC class translation factor GTPase superfamily. Classic translation factor GTPase family. EF-G/EF-2 subfamily.

It localises to the cytoplasm. In terms of biological role, catalyzes the GTP-dependent ribosomal translocation step during translation elongation. During this step, the ribosome changes from the pre-translocational (PRE) to the post-translocational (POST) state as the newly formed A-site-bound peptidyl-tRNA and P-site-bound deacylated tRNA move to the P and E sites, respectively. Catalyzes the coordinated movement of the two tRNA molecules, the mRNA and conformational changes in the ribosome. This chain is Elongation factor G 2, found in Burkholderia mallei (strain ATCC 23344).